The chain runs to 1927 residues: Immunoglobulin A1 protease (1927 aa).

A signal peptide spans 1-42 (MEKYFGEKQERFSFRKLSVGLVSATISSLFFMSVLASSSVDA). The propeptide occupies 43-99 (QETAGVHYKYVADSELSSEEKKQLVYDIPTYVENDDETYYLVYKLNSQNQLAELPNT). The short motif at 96 to 100 (LPNTG) is the LPXTG sorting signal element. Pentaglycyl murein peptidoglycan amidated threonine is present on Thr-99. 2 consecutive transmembrane segments (helical) span residues 106–125 (QALVAGASLAALGILIFAVS) and 132–154 (KTVLHLVLVAGIGNGVLVSVHAL). Topologically, residues 155-1927 (ENHLLLNYNT…FRRSIFENKK (1773 aa)) are extracellular. Over residues 235–246 (QEQTPVSSTKPT) the composition is skewed to polar residues. Disordered stretches follow at residues 235–305 (QEQT…NPQD), 371–394 (SREIVSTSTTAPSPRIVEKGTKKT), and 426–640 (EAVV…PEKT). Positions 276-296 (LAEHKNLETKKEEKISPKEKT) are enriched in basic and acidic residues. One can recognise a G5 domain in the interval 314–393 (KPELLYREET…PRIVEKGTKK (80 aa)). Repeat copies occupy residues 419–435 (AIQPELPEAVVSDKGEP), 436–452 (EVQPTLPEAVVTDKGEP), and 453–469 (AVQPELPEAVVSDKGEP). Residues 419–469 (AIQPELPEAVVSDKGEPEVQPTLPEAVVTDKGEPAVQPELPEAVVSDKGEP) are 3 X 17 AA approximate tandem repeats. Residues 485–511 (VKPETPVEKTKEQGPEKTEEVPVKPTE) are compositionally biased toward basic and acidic residues. Polar residues-rich tracts occupy residues 516-529 (NPNEGTTEGTSIQG), 538-559 (EDTQTNSGKIANENTGEVSNKP), and 568-606 (ESNQPEKNGTATKPENSGNTTSENGQTEPEPSNGNSTED). A compositionally biased stretch (low complexity) spans 609–619 (TKSNTSNSNGN). Residues 620 to 640 (EEIKQENELDPDKKVEDPEKT) are compositionally biased toward basic and acidic residues. Position 1565 (His-1565) interacts with Zn(2+). Glu-1566 is an active-site residue. His-1569 and Glu-1589 together coordinate Zn(2+).

The protein belongs to the peptidase M26 family. The cofactor is Zn(2+). Post-translationally, the Gram-positive cell-wall anchor motif LPXTG is located in the N-terminal part, in contrast to such motifs in other known streptococcal and staphylococcal proteins. The protease could be cleaved by the sortase and anchored in the membrane via the two potential N-terminal transmembrane domains, whereas the propeptide located prior to the LPXTG motif would remain attached to the cell wall peptidoglycan by an amide bond.

The protein localises to the secreted. It localises to the cell wall. The protein resides in the membrane. The enzyme catalyses Cleavage of Pro-|-Thr bond in the hinge region of the heavy chain of human IgA.. Functionally, zinc metalloproteinase which cleaves human immunoglobulin A1 (IgA1) in the hinge region, rendering it less efficient in coating the surface of colonizing or invading pneumococci. May be responsible for pneumococcal infection and is potentially involved in distinct stages of pneumococcal disease. The chain is Immunoglobulin A1 protease (iga) from Streptococcus pneumoniae.